The chain runs to 510 residues: D-alanine--D-alanyl carrier protein ligase (510 aa).

157 to 158 (TS) contacts ATP. Aspartate 202 contributes to the D-alanine binding site. 297–302 (NTYGPT) lines the ATP pocket. Valine 306 serves as a coordination point for D-alanine. Residues aspartate 389 and lysine 498 each coordinate ATP. Residue lysine 498 coordinates D-alanine.

It belongs to the ATP-dependent AMP-binding enzyme family. DltA subfamily.

It localises to the cytoplasm. The enzyme catalyses holo-[D-alanyl-carrier protein] + D-alanine + ATP = D-alanyl-[D-alanyl-carrier protein] + AMP + diphosphate. The protein operates within cell wall biogenesis; lipoteichoic acid biosynthesis. Its function is as follows. Catalyzes the first step in the D-alanylation of lipoteichoic acid (LTA), the activation of D-alanine and its transfer onto the D-alanyl carrier protein (Dcp) DltC. In an ATP-dependent two-step reaction, forms a high energy D-alanyl-AMP intermediate, followed by transfer of the D-alanyl residue as a thiol ester to the phosphopantheinyl prosthetic group of the Dcp. D-alanylation of LTA plays an important role in modulating the properties of the cell wall in Gram-positive bacteria, influencing the net charge of the cell wall. The protein is D-alanine--D-alanyl carrier protein ligase of Listeria innocua serovar 6a (strain ATCC BAA-680 / CLIP 11262).